Reading from the N-terminus, the 354-residue chain is Glutamine synthetase (354 aa).

The GS beta-grasp domain occupies isoleucine 22–glycine 101. The GS catalytic domain occupies histidine 108–lysine 354.

Belongs to the glutamine synthetase family. As to quaternary structure, homooctamer.

It is found in the cytoplasm. The catalysed reaction is L-glutamate + NH4(+) + ATP = L-glutamine + ADP + phosphate + H(+). In Agaricus bisporus (White button mushroom), this protein is Glutamine synthetase (glnA).